The sequence spans 301 residues: Homoserine O-acetyltransferase (301 aa).

The active-site Acyl-thioester intermediate is cysteine 142. The substrate site is built by lysine 163 and serine 192. Residue histidine 235 is the Proton acceptor of the active site. Residue glutamate 237 is part of the active site. A substrate-binding site is contributed by arginine 249.

This sequence belongs to the MetA family.

It is found in the cytoplasm. It carries out the reaction L-homoserine + acetyl-CoA = O-acetyl-L-homoserine + CoA. It participates in amino-acid biosynthesis; L-methionine biosynthesis via de novo pathway; O-acetyl-L-homoserine from L-homoserine: step 1/1. Its function is as follows. Transfers an acetyl group from acetyl-CoA to L-homoserine, forming acetyl-L-homoserine. This is Homoserine O-acetyltransferase from Bacillus cereus (strain 03BB102).